The following is a 418-amino-acid chain: Glutamyl-tRNA reductase (418 aa).

Residues 49 to 52 (TCNR), S109, 114 to 116 (EPQ), and Q120 each bind substrate. The Nucleophile role is filled by C50. 189–194 (GAGETI) is a binding site for NADP(+).

This sequence belongs to the glutamyl-tRNA reductase family. In terms of assembly, homodimer.

It carries out the reaction (S)-4-amino-5-oxopentanoate + tRNA(Glu) + NADP(+) = L-glutamyl-tRNA(Glu) + NADPH + H(+). Its pathway is porphyrin-containing compound metabolism; protoporphyrin-IX biosynthesis; 5-aminolevulinate from L-glutamyl-tRNA(Glu): step 1/2. Its function is as follows. Catalyzes the NADPH-dependent reduction of glutamyl-tRNA(Glu) to glutamate 1-semialdehyde (GSA). The polypeptide is Glutamyl-tRNA reductase (Salmonella choleraesuis (strain SC-B67)).